We begin with the raw amino-acid sequence, 73 residues long: UPF0435 protein BH2488 (73 aa).

The protein belongs to the UPF0435 family.

This chain is UPF0435 protein BH2488, found in Halalkalibacterium halodurans (strain ATCC BAA-125 / DSM 18197 / FERM 7344 / JCM 9153 / C-125) (Bacillus halodurans).